Reading from the N-terminus, the 74-residue chain is Anaphase-promoting complex subunit 13 (74 aa).

This sequence belongs to the APC13 family. As to quaternary structure, the APC/C is composed of at least 12 subunits.

The protein resides in the nucleus. Its pathway is protein modification; protein ubiquitination. Its function is as follows. Component of the anaphase promoting complex/cyclosome (APC/C), a cell cycle-regulated E3 ubiquitin ligase that controls progression through mitosis and the G1 phase of the cell cycle. The APC/C complex acts by mediating ubiquitination and subsequent degradation of target proteins: it mainly mediates the formation of 'Lys-11'-linked polyubiquitin chains and, to a lower extent, the formation of 'Lys-48'- and 'Lys-63'-linked polyubiquitin chains. The APC/C complex catalyzes assembly of branched 'Lys-11'-/'Lys-48'-linked branched ubiquitin chains on target proteins. The sequence is that of Anaphase-promoting complex subunit 13 (anapc13) from Xenopus tropicalis (Western clawed frog).